Here is a 273-residue protein sequence, read N- to C-terminus: WIMGHMVNAIAQIDEFVNLGANSIETDVSFDKNANPEYTYHGIPCDCGRTCTKSEKFNDFLQGLQKATTPGDSKYQEKLVLVVFDLKSSSLYDNQASDAGKKLAKSLLQNYWKNGNNGGRAYIVLSIPNLAHYKLITGFKETLKTEGHPELMEKVGYDFSGNDDIDQVAKAYKKAGVTGHVWQSDGITNCLPRGLDRVKQAVANRDSSNGFINKVYYWTVDKRSTTRGALDAGVDGVMTNYPDVIADVLSESAYKSKFRIATYEDNPWETFKN.

Residue histidine 5 is part of the active site. Mg(2+) is bound by residues glutamate 25 and aspartate 27. Histidine 41 serves as the catalytic Nucleophile. Cystine bridges form between cysteine 45/cysteine 51 and cysteine 47/cysteine 190. Position 85 (aspartate 85) interacts with Mg(2+).

The protein belongs to the arthropod phospholipase D family. Class II subfamily. It depends on Mg(2+) as a cofactor. In terms of tissue distribution, expressed by the venom gland.

It is found in the secreted. It catalyses the reaction an N-(acyl)-sphingosylphosphocholine = an N-(acyl)-sphingosyl-1,3-cyclic phosphate + choline. It carries out the reaction an N-(acyl)-sphingosylphosphoethanolamine = an N-(acyl)-sphingosyl-1,3-cyclic phosphate + ethanolamine. The enzyme catalyses a 1-acyl-sn-glycero-3-phosphocholine = a 1-acyl-sn-glycero-2,3-cyclic phosphate + choline. The catalysed reaction is a 1-acyl-sn-glycero-3-phosphoethanolamine = a 1-acyl-sn-glycero-2,3-cyclic phosphate + ethanolamine. Its function is as follows. Dermonecrotic toxins cleave the phosphodiester linkage between the phosphate and headgroup of certain phospholipids (sphingolipid and lysolipid substrates), forming an alcohol (often choline) and a cyclic phosphate. This toxin acts on sphingomyelin (SM). It may also act on ceramide phosphoethanolamine (CPE), lysophosphatidylcholine (LPC) and lysophosphatidylethanolamine (LPE), but not on lysophosphatidylserine (LPS), and lysophosphatidylglycerol (LPG). It acts by transphosphatidylation, releasing exclusively cyclic phosphate products as second products. Induces dermonecrosis, hemolysis, increased vascular permeability, edema, inflammatory response, and platelet aggregation. This chain is Dermonecrotic toxin LdSicTox-alphaIB3b, found in Loxosceles deserta (Desert recluse spider).